A 156-amino-acid polypeptide reads, in one-letter code: V-type proton ATPase 16 kDa proteolipid subunit c (156 aa).

At 1 to 7 (MAENPIY) the chain is on the lumenal side. Residues 8-30 (GPFFGVMGAASAIIFSALGAAYG) traverse the membrane as a helical segment. Residues 31–52 (TAKSGTGIAAMSVMRPELIMKS) are Cytoplasmic-facing. The chain crosses the membrane as a helical span at residues 53 to 73 (IIPVVMAGIIAIYGLVVAVLI). Residues 74–92 (AGSLDAPSNNYTLYKGFIH) lie on the Lumenal side of the membrane. The helical transmembrane segment at 93-114 (LGAGLAVGFSGLAAGFAIGIVG) threads the bilayer. Residues 115–126 (DAGVRGTAQQPR) are Cytoplasmic-facing. A helical transmembrane segment spans residues 127–152 (LFVGMILILIFAEVLGLYGLIVAIYL). Residues 153–156 (YTKQ) lie on the Lumenal side of the membrane.

The protein belongs to the V-ATPase proteolipid subunit family. As to quaternary structure, V-ATPase is a heteromultimeric enzyme made up of two complexes: the ATP-hydrolytic V1 complex and the proton translocation V0 complex. The V1 complex consists of three catalytic AB heterodimers that form a heterohexamer, three peripheral stalks each consisting of EG heterodimers, one central rotor including subunits D and F, and the regulatory subunits C and H. The proton translocation complex V0 consists of the proton transport subunit a, a ring of proteolipid subunits c9c'', rotary subunit d, subunits e and f, and the accessory subunits VhaAC45 and ATP6AP2.

It localises to the membrane. In terms of biological role, proton-conducting pore forming subunit of the V0 complex of vacuolar(H+)-ATPase (V-ATPase), a multisubunit enzyme composed of a peripheral complex (V1) that hydrolyzes ATP and a membrane integral complex (V0) that translocates protons. V-ATPase is responsible for acidifying and maintaining the pH of intracellular compartments and in some cell types, is targeted to the plasma membrane, where it is responsible for acidifying the extracellular environment. The chain is V-type proton ATPase 16 kDa proteolipid subunit c (VHA16) from Heliothis virescens (Tobacco budworm moth).